A 217-amino-acid polypeptide reads, in one-letter code: tRNA (guanine-N(7)-)-methyltransferase (217 aa).

The S-adenosyl-L-methionine site is built by Glu44, Glu69, Asp96, and Asp118. The active site involves Asp118. Residues Lys122, Asp154, and 191 to 194 each bind substrate; that span reads TEYE.

Belongs to the class I-like SAM-binding methyltransferase superfamily. TrmB family.

It carries out the reaction guanosine(46) in tRNA + S-adenosyl-L-methionine = N(7)-methylguanosine(46) in tRNA + S-adenosyl-L-homocysteine. It participates in tRNA modification; N(7)-methylguanine-tRNA biosynthesis. Functionally, catalyzes the formation of N(7)-methylguanine at position 46 (m7G46) in tRNA. This is tRNA (guanine-N(7)-)-methyltransferase from Bacillus mycoides (strain KBAB4) (Bacillus weihenstephanensis).